The chain runs to 494 residues: Argininosuccinate synthase, chloroplastic (494 aa).

The N-terminal 73 residues, 1 to 73 (MAEISATSFP…SRSCKNQAIR (73 aa)), are a transit peptide targeting the chloroplast. An N-acetylalanine modification is found at Ala-74. ATP-binding positions include 102–110 (AYSGGLDTS) and Ala-129. Residues Tyr-181 and Ser-186 each coordinate L-citrulline. Gly-211 provides a ligand contact to ATP. Residues Thr-213, Asn-217, and Asp-218 each contribute to the L-aspartate site. Asn-217 contributes to the L-citrulline binding site. L-citrulline contacts are provided by Arg-221, Ser-270, Ser-279, Glu-355, and Tyr-367.

The protein belongs to the argininosuccinate synthase family. Type 1 subfamily. In terms of assembly, homotetramer.

The protein resides in the plastid. Its subcellular location is the chloroplast. It carries out the reaction L-citrulline + L-aspartate + ATP = 2-(N(omega)-L-arginino)succinate + AMP + diphosphate + H(+). It participates in amino-acid biosynthesis; L-arginine biosynthesis; L-arginine from L-ornithine and carbamoyl phosphate: step 2/3. The sequence is that of Argininosuccinate synthase, chloroplastic from Arabidopsis thaliana (Mouse-ear cress).